Reading from the N-terminus, the 538-residue chain is MRVNDLTPQDLKAYGINDVQELVYNPDYDTLYQEELNPALEGYERGVLTNTGAIAVDTGIFTGRSPKDKYIVRDDTTRDTLWWADKGKGKNDNKPLSQETWQHLKGLVTQQLSGKRLFIIDAFCGANADTRLSVRFITEVAWQAHFVKNMFIRPTDEELQDFEPDFIVMNGAKCTNPQWKEQGLNSENFIAFNLTERIQLIGGTWYGGEMKKGMFSVMNYLLPLQGIASMHCSANVGEEGDVAVFFGLSGTGKTTLSTDPKRRLIGDDEHGWDDDGVFNFEGGCYAKTIRLSAEAEPDIFHAIRRDALLENVTVRADGTVDFDDASKTENTRVSYPIYHIDNIVKPVSKAGHASKVIFLTADAFGVLPPVSRLTASQTQYHFLSGFTAKLAGTERGVTEPTPTFSACFGAAFLSLHPTQYAEVLVKRMQAAGAQAYLVNTGWNGTGKRISIKDTRAIIDAIIDGSLDDAETFTLPMFDLAIPTKLPGVDTHILDPRNTYGSPEQWQEKAEALAKLFIENFEKYTDTPAGAALVSAGPR.

Substrate contacts are provided by R64, Y206, and K212. Residues K212, H231, and 247–255 (GLSGTGKTT) each bind ATP. Residues K212 and H231 each contribute to the Mn(2+) site. Residue D268 coordinates Mn(2+). ATP-binding positions include E296, R332, 448-449 (RI), and T454. R332 lines the substrate pocket.

This sequence belongs to the phosphoenolpyruvate carboxykinase (ATP) family. In terms of assembly, monomer. The cofactor is Mn(2+).

It localises to the cytoplasm. The catalysed reaction is oxaloacetate + ATP = phosphoenolpyruvate + ADP + CO2. The protein operates within carbohydrate biosynthesis; gluconeogenesis. Functionally, involved in the gluconeogenesis. Catalyzes the conversion of oxaloacetate (OAA) to phosphoenolpyruvate (PEP) through direct phosphoryl transfer between the nucleoside triphosphate and OAA. In Enterobacter sp. (strain 638), this protein is Phosphoenolpyruvate carboxykinase (ATP).